Reading from the N-terminus, the 171-residue chain is S-ribosylhomocysteine lyase (171 aa).

Residues His-54, His-58, and Cys-128 each contribute to the Fe cation site.

Belongs to the LuxS family. Homodimer. Fe cation serves as cofactor.

It catalyses the reaction S-(5-deoxy-D-ribos-5-yl)-L-homocysteine = (S)-4,5-dihydroxypentane-2,3-dione + L-homocysteine. Involved in the synthesis of autoinducer 2 (AI-2) which is secreted by bacteria and is used to communicate both the cell density and the metabolic potential of the environment. The regulation of gene expression in response to changes in cell density is called quorum sensing. Catalyzes the transformation of S-ribosylhomocysteine (RHC) to homocysteine (HC) and 4,5-dihydroxy-2,3-pentadione (DPD). In Enterobacter sp. (strain 638), this protein is S-ribosylhomocysteine lyase.